The following is a 352-amino-acid chain: Phosphoribosylformylglycinamidine cyclo-ligase (352 aa).

This sequence belongs to the AIR synthase family.

It is found in the cytoplasm. It carries out the reaction 2-formamido-N(1)-(5-O-phospho-beta-D-ribosyl)acetamidine + ATP = 5-amino-1-(5-phospho-beta-D-ribosyl)imidazole + ADP + phosphate + H(+). Its pathway is purine metabolism; IMP biosynthesis via de novo pathway; 5-amino-1-(5-phospho-D-ribosyl)imidazole from N(2)-formyl-N(1)-(5-phospho-D-ribosyl)glycinamide: step 2/2. This Pseudomonas putida (strain W619) protein is Phosphoribosylformylglycinamidine cyclo-ligase.